The primary structure comprises 270 residues: Tetraspanin-17 (270 aa).

Residues 1–19 (MPGKHQQFQDPEVGCCGKY) are Cytoplasmic-facing. Residues 20–40 (FLFGFNIVFWVLGALFLAIGL) traverse the membrane as a helical segment. The Extracellular portion of the chain corresponds to 41 to 63 (WAWGEKGVLSNISGLTDLGGLDP). N-linked (GlcNAc...) asparagine glycosylation occurs at asparagine 51. Residues 64 to 84 (VWLFVVIGGIMSVLGFAGCIG) form a helical membrane-spanning segment. The Cytoplasmic segment spans residues 85 to 94 (ALRENTFLLK). Residues 95-115 (FFSVFLGLIFFLELAAGILAF) form a helical membrane-spanning segment. Topologically, residues 116 to 234 (VFKDWIRDQL…GQFEKWLQDN (119 aa)) are extracellular. 4 disulfides stabilise this stretch: cysteine 155/cysteine 223, cysteine 156/cysteine 188, cysteine 172/cysteine 182, and cysteine 189/cysteine 202. Asparagine 171 carries an N-linked (GlcNAc...) asparagine glycan. The helical transmembrane segment at 235–255 (LIVVAGVLVAIALLQICGICL) threads the bilayer. Residues 256–270 (AQNLVSDIEAVKANW) are Cytoplasmic-facing.

It belongs to the tetraspanin (TM4SF) family. In terms of assembly, interacts with ADAM10; the interaction influences ADAM10 substrate specificity, endocytosis and turnover.

It is found in the cell membrane. Part of TspanC8 subgroup, composed of 6 members that interact with the transmembrane metalloprotease ADAM10. This interaction is required for ADAM10 exit from the endoplasmic reticulum and for enzymatic maturation and trafficking to the cell surface as well as substrate specificity. Different TspanC8/ADAM10 complexes have distinct substrates. Seems to regulate VE-cadherin expression in endothelial cells probably through interaction with ADAM10, promoting leukocyte transmigration. In Rattus norvegicus (Rat), this protein is Tetraspanin-17 (Tspan17).